A 342-amino-acid chain; its full sequence is MSARGGPLARLEARITREWQRRGALAWALTPFACVFGLCAALRRTAYTQGWKQPVDVGVPVVVVGNVTVGGTGKTPTVIALVDALRAAGFTPGVVSRGYGANVQAPTAVTAASRASAAGDEPLLIARRTGAPVWVCPDRVAAAQALRAAHPEVDVIVSDDGLQHYRLARTVELVVFDHRLGGNGFLLPAGPLREPLSRHRDATLVNDPYSGALPPWPDTYALALTPGAAWHLDQPTLRRPLSQFANERVLAAAGIGAPERFFATLRAAGLAPATRALPDHYAFADNPFVDDAVDAILITEKDAVKLGASWRDARLWVVPVEAALDPRLIALVVEKLRGRSPA.

68 to 75 (TVGGTGKT) lines the ATP pocket.

It belongs to the LpxK family.

It catalyses the reaction a lipid A disaccharide + ATP = a lipid IVA + ADP + H(+). Its pathway is glycolipid biosynthesis; lipid IV(A) biosynthesis; lipid IV(A) from (3R)-3-hydroxytetradecanoyl-[acyl-carrier-protein] and UDP-N-acetyl-alpha-D-glucosamine: step 6/6. Its function is as follows. Transfers the gamma-phosphate of ATP to the 4'-position of a tetraacyldisaccharide 1-phosphate intermediate (termed DS-1-P) to form tetraacyldisaccharide 1,4'-bis-phosphate (lipid IVA). This Burkholderia vietnamiensis (strain G4 / LMG 22486) (Burkholderia cepacia (strain R1808)) protein is Tetraacyldisaccharide 4'-kinase.